The sequence spans 484 residues: Cysteine--tRNA ligase (484 aa).

C29 contacts Zn(2+). The short motif at 31–41 is the 'HIGH' region element; that stretch reads ITVYDYCHLGH. Residues C215, H240, and E244 each contribute to the Zn(2+) site. The 'KMSKS' region motif lies at 272–276; sequence KMSKS. Position 275 (K275) interacts with ATP.

It belongs to the class-I aminoacyl-tRNA synthetase family. Monomer. Zn(2+) serves as cofactor.

It is found in the cytoplasm. The enzyme catalyses tRNA(Cys) + L-cysteine + ATP = L-cysteinyl-tRNA(Cys) + AMP + diphosphate. In Rippkaea orientalis (strain PCC 8801 / RF-1) (Cyanothece sp. (strain PCC 8801)), this protein is Cysteine--tRNA ligase.